Here is a 310-residue protein sequence, read N- to C-terminus: HTH-type transcriptional regulator PunR (310 aa).

The HTH lysR-type domain maps to 2–59 (WSEYSLEVVDAVARNGSFSAAAQELHRVPSAVSYTVRQLEEWLAVPLFERRHRDVELT). The segment at residues 19 to 38 (FSAAAQELHRVPSAVSYTVR) is a DNA-binding region (H-T-H motif).

The protein belongs to the LysR transcriptional regulatory family.

The protein resides in the cytoplasm. In terms of biological role, transcriptional regulator that activates the expression of punC, which encodes a purine nucleoside transporter. The sequence is that of HTH-type transcriptional regulator PunR from Escherichia coli O157:H7.